Consider the following 86-residue polypeptide: OMEGA-stichotoxin-Shd4a (86 aa).

The first 23 residues, 1–23, serve as a signal peptide directing secretion; the sequence is MASFRTLFACVVILCCVLWSSMA. Residues 24–36 constitute a propeptide that is removed on maturation; the sequence is RYGEDMEVETEMN. The region spanning 40–82 is the EGF-like domain; sequence EGVRCTGQHASSFCLNGGTCRHIASLGEYYCICPGDYTGHRCD. Disulfide bonds link C44-C59, C53-C70, and C72-C81.

This sequence belongs to the EGF domain peptide family.

It localises to the secreted. Its subcellular location is the nematocyst. In terms of biological role, has both toxic and EGF activity. Its EGF activity consists of rounding cells (morphological change) and inducing tyrosine phosphorylation of the EGFR in A431 cells, but with a lower potency that human EGF. This Stichodactyla haddoni (Saddle carpet anemone) protein is OMEGA-stichotoxin-Shd4a.